We begin with the raw amino-acid sequence, 205 residues long: Thymidine kinase (205 aa).

ATP is bound by residues 9–16 (SAMNAGKS) and 87–90 (DECQ). E88 serves as the catalytic Proton acceptor. Zn(2+) is bound by residues C145, C147, C182, and H185.

This sequence belongs to the thymidine kinase family. As to quaternary structure, homotetramer.

It is found in the cytoplasm. It catalyses the reaction thymidine + ATP = dTMP + ADP + H(+). Its activity is regulated as follows. Allosteric enzyme which is feedback inhibited by dTTP and activated by a number of dNDP and dNTP. Phosphorylates both thymidine and deoxyuridine. This Escherichia coli (strain K12) protein is Thymidine kinase.